The sequence spans 503 residues: Putative cytochrome P450 71A28 (503 aa).

The helical transmembrane segment at 1–21 (MILISLCFTTFLAFLFLNPLL) threads the bilayer. Cys443 lines the heme pocket.

The protein belongs to the cytochrome P450 family. It depends on heme as a cofactor.

It localises to the membrane. The sequence is that of Putative cytochrome P450 71A28 (CYP71A28) from Arabidopsis thaliana (Mouse-ear cress).